A 460-amino-acid polypeptide reads, in one-letter code: Amino acid transporter AVT6A (460 aa).

The next 11 membrane-spanning stretches (helical) occupy residues 45–65, 66–86, 120–140, 172–192, 199–219, 238–258, 281–301, 336–356, 371–391, 394–414, and 427–447; these read FSGA…MALP, ATMK…MAFL, ILLQ…YMII, AAIL…FKRI, SALS…ISIM, LTSF…FICH, ALML…LLFG, LMLV…GLLF, CLTA…PSIW, FQFT…ASII, and TTLA…AIYS.

It belongs to the amino acid/polyamine transporter 2 family. Amino acid/auxin permease (AAAP) (TC 2.A.18.6) subfamily.

It localises to the membrane. In Arabidopsis thaliana (Mouse-ear cress), this protein is Amino acid transporter AVT6A.